A 364-amino-acid chain; its full sequence is Aminomethyltransferase (364 aa).

Belongs to the GcvT family. The glycine cleavage system is composed of four proteins: P, T, L and H.

It catalyses the reaction N(6)-[(R)-S(8)-aminomethyldihydrolipoyl]-L-lysyl-[protein] + (6S)-5,6,7,8-tetrahydrofolate = N(6)-[(R)-dihydrolipoyl]-L-lysyl-[protein] + (6R)-5,10-methylene-5,6,7,8-tetrahydrofolate + NH4(+). Functionally, the glycine cleavage system catalyzes the degradation of glycine. This Escherichia coli O17:K52:H18 (strain UMN026 / ExPEC) protein is Aminomethyltransferase.